The chain runs to 162 residues: 2-C-methyl-D-erythritol 2,4-cyclodiphosphate synthase (162 aa).

The a divalent metal cation site is built by Asp10 and His12. 4-CDP-2-C-methyl-D-erythritol 2-phosphate is bound by residues 10-12 (DVH) and 36-37 (HS). His44 contributes to the a divalent metal cation binding site. 4-CDP-2-C-methyl-D-erythritol 2-phosphate-binding positions include 58–60 (DIG), 63–67 (FSDTD), and Arg144.

It belongs to the IspF family. Homotrimer. It depends on a divalent metal cation as a cofactor.

The enzyme catalyses 4-CDP-2-C-methyl-D-erythritol 2-phosphate = 2-C-methyl-D-erythritol 2,4-cyclic diphosphate + CMP. It participates in isoprenoid biosynthesis; isopentenyl diphosphate biosynthesis via DXP pathway; isopentenyl diphosphate from 1-deoxy-D-xylulose 5-phosphate: step 4/6. Its function is as follows. Involved in the biosynthesis of isopentenyl diphosphate (IPP) and dimethylallyl diphosphate (DMAPP), two major building blocks of isoprenoid compounds. Catalyzes the conversion of 4-diphosphocytidyl-2-C-methyl-D-erythritol 2-phosphate (CDP-ME2P) to 2-C-methyl-D-erythritol 2,4-cyclodiphosphate (ME-CPP) with a corresponding release of cytidine 5-monophosphate (CMP). The sequence is that of 2-C-methyl-D-erythritol 2,4-cyclodiphosphate synthase from Burkholderia mallei (strain NCTC 10247).